The chain runs to 452 residues: Keratin, type I cytoskeletal 42 (452 aa).

Residues 4-93 (TTSIRQFSTS…GVSDALLGGS (90 aa)) form a head region. Coiled-coil stretches lie at residues 93-132 (SEKE…WYKK) and 188-407 (NLRM…HLAT). The interval 94–129 (EKETMQNLNDRLATYLDRVRALEEANTDLEVKIREW) is coil 1A. The 312-residue stretch at 94-405 (EKETMQNLND…RLLEGEDAHL (312 aa)) folds into the IF rod domain. Residues 130–147 (YKKQGPGPARDYSPYFKT) form a linker 1 region. The interval 148 to 239 (IEDLRNKILA…KNHEEEMNAL (92 aa)) is coil 1B. The segment at 240–262 (RGQVGGDVNVEMDAAPGVDLSRI) is linker 12. Residues 263 to 401 (LNEMRDQYEK…ATYRRLLEGE (139 aa)) are coil 2. Positions 402 to 452 (DAHLATQYSSSLASQASREGTVTSRQVRTIVEEVQDGKVVSSREQVHRSTH) are tail.

This sequence belongs to the intermediate filament family. In terms of assembly, heterodimer of a type I and a type II keratin. Colocalizes with KRT8/KRT18 filament network.

The protein resides in the cytoplasm. This chain is Keratin, type I cytoskeletal 42, found in Rattus norvegicus (Rat).